A 467-amino-acid polypeptide reads, in one-letter code: UDP-N-acetylmuramate--L-alanine ligase (467 aa).

Residue 112–118 (GTHGKTT) participates in ATP binding.

This sequence belongs to the MurCDEF family.

The protein localises to the cytoplasm. The catalysed reaction is UDP-N-acetyl-alpha-D-muramate + L-alanine + ATP = UDP-N-acetyl-alpha-D-muramoyl-L-alanine + ADP + phosphate + H(+). It participates in cell wall biogenesis; peptidoglycan biosynthesis. In terms of biological role, cell wall formation. The chain is UDP-N-acetylmuramate--L-alanine ligase from Paraburkholderia xenovorans (strain LB400).